Consider the following 456-residue polypeptide: Enolase (456 aa).

Position 167 (Q167) interacts with (2R)-2-phosphoglycerate. Residue E209 is the Proton donor of the active site. Residues D250, E312, and D339 each coordinate Mg(2+). Residues K364, R393, S394, and K415 each coordinate (2R)-2-phosphoglycerate. The active-site Proton acceptor is the K364.

Belongs to the enolase family. The cofactor is Mg(2+).

The protein localises to the cytoplasm. Its subcellular location is the secreted. It is found in the cell surface. The enzyme catalyses (2R)-2-phosphoglycerate = phosphoenolpyruvate + H2O. It functions in the pathway carbohydrate degradation; glycolysis; pyruvate from D-glyceraldehyde 3-phosphate: step 4/5. Catalyzes the reversible conversion of 2-phosphoglycerate (2-PG) into phosphoenolpyruvate (PEP). It is essential for the degradation of carbohydrates via glycolysis. This chain is Enolase, found in Mycoplasmopsis pulmonis (strain UAB CTIP) (Mycoplasma pulmonis).